The following is a 227-amino-acid chain: Cleavage and polyadenylation specificity factor subunit 5 (227 aa).

Residue Ser-2 is modified to N-acetylserine. Residues 2–147 (SVVPPNRSQT…DWVIDDCIGN (146 aa)) form a necessary for RNA-binding region. Arg-15 bears the Omega-N-methylarginine mark. 2 positions are modified to N6-acetyllysine: Lys-23 and Lys-29. Tyr-40 carries the post-translational modification Phosphotyrosine. The residue at position 56 (Lys-56) is an N6-acetyllysine. The region spanning 76-201 (MRRTVEGVLI…KLVAAPLFEL (126 aa)) is the Nudix hydrolase domain. The tract at residues 81 to 160 (EGVLIVHEHR…PNFEPPQYPY (80 aa)) is necessary for interactions with PAPOLA and PABPN1. The interaction with RNA stretch occupies residues 102 to 104 (TFF). Positions 109–130 (GELNPGEDEVEGLKRLMTEILG) match the Nudix box motif.

It belongs to the Nudix hydrolase family. CPSF5 subfamily. Homodimer (via N- and C-terminus); binds RNA as homodimer. Component of the cleavage factor Im (CFIm) complex which is a heterotetramer composed of two subunits of NUDT21/CPSF5 and two subunits of CPSF6 or CPSF7 or a heterodimer of CPSF6 and CPSF7. The cleavage factor Im (CFIm) complex associates with the CPSF and CSTF complexes to promote the assembly of the core mRNA 3'-processing machinery. Interacts with CPSF6 (via the RRM domain); this interaction is direct and enhances binding to RNA. Interacts with CPSF7. Interacts with FIP1L1; this interaction occurs in a RNA sequence-specific manner. Interacts with PABPN1. Interacts (via N-terminus) with PAPOLA (via C-terminus); this interaction is direct and diminished by acetylation. Interacts with SNRNP70. Interacts with VIRMA. Post-translationally, acetylated mainly by p300/CBP, recruited to the complex by CPSF6. Acetylation decreases interaction with PAPAO. Deacetylated by the class I/II HDACs, HDAC1, HDAC3 and HDAC10, and by the class III HDACs, SIRT1 and SIRT2. As to expression, expressed in testis. Expressed in male germ cells (at protein level).

It is found in the nucleus. Its subcellular location is the cytoplasm. In terms of biological role, component of the cleavage factor Im (CFIm) complex that functions as an activator of the pre-mRNA 3'-end cleavage and polyadenylation processing required for the maturation of pre-mRNA into functional mRNAs. CFIm contributes to the recruitment of multiprotein complexes on specific sequences on the pre-mRNA 3'-end, so called cleavage and polyadenylation signals (pA signals). Most pre-mRNAs contain multiple pA signals, resulting in alternative cleavage and polyadenylation (APA) producing mRNAs with variable 3'-end formation. The CFIm complex acts as a key regulator of cleavage and polyadenylation site choice during APA through its binding to 5'-UGUA-3' elements localized in the 3'-untranslated region (UTR) for a huge number of pre-mRNAs. NUDT21/CPSF5 activates indirectly the mRNA 3'-processing machinery by recruiting CPSF6 and/or CPSF7. Binds to 5'-UGUA-3' elements localized upstream of pA signals that act as enhancers of pre-mRNA 3'-end processing. The homodimer mediates simultaneous sequence-specific recognition of two 5'-UGUA-3' elements within the pre-mRNA. Plays a role in somatic cell fate transitions and pluripotency by regulating widespread changes in gene expression through an APA-dependent function. Binds to chromatin. Binds to, but does not hydrolyze mono- and di-adenosine nucleotides. The polypeptide is Cleavage and polyadenylation specificity factor subunit 5 (Mus musculus (Mouse)).